A 270-amino-acid chain; its full sequence is Thiazole synthase (270 aa).

Lysine 112 (schiff-base intermediate with DXP) is an active-site residue. Residues glycine 173, 199–200 (AG), and 221–222 (NS) contribute to the 1-deoxy-D-xylulose 5-phosphate site.

It belongs to the ThiG family. In terms of assembly, homotetramer. Forms heterodimers with either ThiH or ThiS.

The protein localises to the cytoplasm. The enzyme catalyses [ThiS sulfur-carrier protein]-C-terminal-Gly-aminoethanethioate + 2-iminoacetate + 1-deoxy-D-xylulose 5-phosphate = [ThiS sulfur-carrier protein]-C-terminal Gly-Gly + 2-[(2R,5Z)-2-carboxy-4-methylthiazol-5(2H)-ylidene]ethyl phosphate + 2 H2O + H(+). It participates in cofactor biosynthesis; thiamine diphosphate biosynthesis. Catalyzes the rearrangement of 1-deoxy-D-xylulose 5-phosphate (DXP) to produce the thiazole phosphate moiety of thiamine. Sulfur is provided by the thiocarboxylate moiety of the carrier protein ThiS. In vitro, sulfur can be provided by H(2)S. The protein is Thiazole synthase of Pseudomonas entomophila (strain L48).